We begin with the raw amino-acid sequence, 523 residues long: 2-isopropylmalate synthase (523 aa).

A Pyruvate carboxyltransferase domain is found at 5 to 267 (VIIFDTTLRD…ETGINAKEIH (263 aa)). Residues aspartate 14, histidine 202, histidine 204, and asparagine 238 each contribute to the Mn(2+) site. Residues 392–523 (KLQQLVVHSD…QQNKRELGGV (132 aa)) are regulatory domain.

This sequence belongs to the alpha-IPM synthase/homocitrate synthase family. LeuA type 1 subfamily. As to quaternary structure, homodimer. It depends on Mn(2+) as a cofactor.

It localises to the cytoplasm. The enzyme catalyses 3-methyl-2-oxobutanoate + acetyl-CoA + H2O = (2S)-2-isopropylmalate + CoA + H(+). The protein operates within amino-acid biosynthesis; L-leucine biosynthesis; L-leucine from 3-methyl-2-oxobutanoate: step 1/4. Catalyzes the condensation of the acetyl group of acetyl-CoA with 3-methyl-2-oxobutanoate (2-ketoisovalerate) to form 3-carboxy-3-hydroxy-4-methylpentanoate (2-isopropylmalate). This is 2-isopropylmalate synthase from Shewanella pealeana (strain ATCC 700345 / ANG-SQ1).